Consider the following 841-residue polypeptide: DNA ligase (841 aa).

Residues 54–58 (DAEYD), 103–104 (SL), and Glu-143 contribute to the NAD(+) site. Lys-145 functions as the N6-AMP-lysine intermediate in the catalytic mechanism. Residues Arg-166, Glu-203, Lys-321, and Lys-345 each contribute to the NAD(+) site. Residues Cys-471, Cys-474, Cys-489, and Cys-495 each contribute to the Zn(2+) site. The segment at 554–575 (KTVAESDQMPSEGSSVGASGKH) is disordered. Residues 561–570 (QMPSEGSSVG) show a composition bias toward polar residues. The BRCT domain occupies 764–841 (GINKAVAGKT…SEAELLTLLG (78 aa)).

Belongs to the NAD-dependent DNA ligase family. LigA subfamily. Mg(2+) serves as cofactor. The cofactor is Mn(2+).

The enzyme catalyses NAD(+) + (deoxyribonucleotide)n-3'-hydroxyl + 5'-phospho-(deoxyribonucleotide)m = (deoxyribonucleotide)n+m + AMP + beta-nicotinamide D-nucleotide.. Its function is as follows. DNA ligase that catalyzes the formation of phosphodiester linkages between 5'-phosphoryl and 3'-hydroxyl groups in double-stranded DNA using NAD as a coenzyme and as the energy source for the reaction. It is essential for DNA replication and repair of damaged DNA. The sequence is that of DNA ligase from Neisseria meningitidis serogroup C / serotype 2a (strain ATCC 700532 / DSM 15464 / FAM18).